Here is a 253-residue protein sequence, read N- to C-terminus: MGTILDKIVEQKKKEVATLYETYTPIKESRKTHSLVESLQQFTVIAEVKRASPSKGDINLHVDVRKQVKTYEECGAGAVSVLTDGQFFKGSFYDLQTAREESSIPLLCKDFIIDKIQIDRAYEAGADIILLIVAALPKEKLKELYSYVLEKGLEAIVEIHDEEELEIAIELNPHVIGINNRNLKTFEVDLGQTEKLGKRLNEEKLLWISESGIHSKEDIIRVKRAGAKGVLVGEALMTSSSIRTFFEDCKVNI.

This sequence belongs to the TrpC family.

It catalyses the reaction 1-(2-carboxyphenylamino)-1-deoxy-D-ribulose 5-phosphate + H(+) = (1S,2R)-1-C-(indol-3-yl)glycerol 3-phosphate + CO2 + H2O. It functions in the pathway amino-acid biosynthesis; L-tryptophan biosynthesis; L-tryptophan from chorismate: step 4/5. This is Indole-3-glycerol phosphate synthase from Bacillus cereus (strain ATCC 10987 / NRS 248).